Consider the following 510-residue polypeptide: Glycerol kinase (510 aa).

ADP is bound at residue T13. The ATP site is built by T13 and T14. T13 lines the sn-glycerol 3-phosphate pocket. R17 is an ADP binding site. 4 residues coordinate sn-glycerol 3-phosphate: R83, E84, Y135, and D255. 5 residues coordinate glycerol: R83, E84, Y135, D255, and Q256. ADP contacts are provided by T277, G321, G421, and N425. Residues T277, G321, and G421 each coordinate ATP.

The protein belongs to the FGGY kinase family.

The enzyme catalyses glycerol + ATP = sn-glycerol 3-phosphate + ADP + H(+). It participates in polyol metabolism; glycerol degradation via glycerol kinase pathway; sn-glycerol 3-phosphate from glycerol: step 1/1. Functionally, key enzyme in the regulation of glycerol uptake and metabolism. Catalyzes the phosphorylation of glycerol to yield sn-glycerol 3-phosphate. The chain is Glycerol kinase from Haloarcula marismortui (strain ATCC 43049 / DSM 3752 / JCM 8966 / VKM B-1809) (Halobacterium marismortui).